The primary structure comprises 398 residues: GATA transcription factor 21 (398 aa).

A disordered region spans residues 20 to 51 (QPFFYPLGSSSSLHHHHHHHHHQVPSNSSSSS). Basic residues predominate over residues 32 to 42 (LHHHHHHHHHQ). Positions 109–116 (PKKETRLK) match the Nuclear localization signal motif. The disordered stretch occupies residues 122 to 144 (KDHEDQPHPLHQNPTKPDSDSDK). Residues 226 to 280 (NGVIRVCSDCNTTKTPLWRSGPRGPKSLCNACGIRQRKARRAAMAAAAAAGDQEV) form a GATA-type zinc finger. Positions 289–353 (LPLKKKLQNK…KSTTSSNSSI (65 aa)) are disordered. The segment covering 291–302 (LKKKLQNKKKRS) has biased composition (basic residues). Residues 343–353 (SKSTTSSNSSI) are compositionally biased toward low complexity.

Belongs to the type IV zinc-finger family. Class B subfamily. As to quaternary structure, interacts with SNL1. Forms heterodimers with GATA18. As to expression, expressed predominantly in leaves, and barely in stems, flowers and siliques.

The protein resides in the nucleus. In terms of biological role, transcriptional regulator that specifically binds 5'-GATA-3' or 5'-GAT-3' motifs within gene promoters. Involved in the modulation of chloroplast development, growth and division in a cytokinin-dependent manner. Repressor of the gibberellic acid (GA) signaling pathway that represses flowering and modulates greening, in a SOC1-dependent manner. Prevents the accumulation of SOC1 during flowering. Promotes chlorophyll biosynthesis throughout the plant, by regulating chlorophyll biosynthetic genes (e.g. HEMA1 and GUN4) and chloroplast localized glutamate synthase (e.g. GLU1). Involved in the regulation of sugar-sensing genes (e.g. HXK1, HXK2, STP13 and PLT6). Regulator of germination, senescence, elongation growth and flowering time. Also influences leaf starch content. In Arabidopsis thaliana (Mouse-ear cress), this protein is GATA transcription factor 21.